Consider the following 391-residue polypeptide: Coiled-coil domain-containing protein 85C (391 aa).

2 coiled-coil regions span residues 19 to 86 (EELL…RELC) and 116 to 146 (KEVGVYQQKLKELEAKQESLIRDNLELKEII). Disordered stretches follow at residues 155 to 238 (GAGS…LNDS) and 278 to 303 (PYHSESQLSPLPQYQEPLQNGSTRVT). A compositionally biased stretch (polar residues) spans 157 to 175 (GSRSSIDSQNSLTNLNGSS). Residues 182 to 194 (DGSSTSSTGSAGS) are compositionally biased toward low complexity. Over residues 280–303 (HSESQLSPLPQYQEPLQNGSTRVT) the composition is skewed to polar residues.

Belongs to the CCDC85 family.

It localises to the cell junction. The protein resides in the tight junction. It is found in the adherens junction. Functionally, may play a role in cell-cell adhesion and epithelium development through its interaction with proteins of the beta-catenin family. May play an important role in cortical development, especially in the maintenance of radial glia. This is Coiled-coil domain-containing protein 85C (ccdc85c) from Xenopus tropicalis (Western clawed frog).